The following is a 165-amino-acid chain: Trypsin alpha-3 (165 aa).

In terms of domain architecture, Peptidase S1 spans 1-163; sequence NSGGVLVSVA…LRSWVVSAAN (163 aa). Asp26 functions as the Charge relay system in the catalytic mechanism. 2 cysteine pairs are disulfide-bonded: Cys89/Cys106 and Cys115/Cys139. Ser119 functions as the Charge relay system in the catalytic mechanism.

It belongs to the peptidase S1 family.

The protein localises to the secreted. It is found in the extracellular space. It carries out the reaction Preferential cleavage: Arg-|-Xaa, Lys-|-Xaa.. This Lucilia cuprina (Green bottle fly) protein is Trypsin alpha-3.